A 170-amino-acid chain; its full sequence is FMRFamide-like neuropeptides 6 (170 aa).

The N-terminal stretch at 1 to 19 (MNSRGLILTLGVVIAVAFA) is a signal peptide. At Q20 the chain carries Pyrrolidone carboxylic acid. Residue F39 is modified to Phenylalanine amide. The propeptide occupies 42–51 (SDGGNPMEME). Position 60 is a phenylalanine amide (F60). Positions 63-81 (RSSGGDEQELVGGDDIDME) are excised as a propeptide. F90 carries the phenylalanine amide modification. The propeptide occupies 93-104 (RSGPQEDDMPME). F113 carries the post-translational modification Phenylalanine amide. The propeptide occupies 116–136 (RSSDMEVIGNEGVDGDAHDLF). F145 carries the post-translational modification Phenylalanine amide. Positions 148–159 (RSMGEEEDHDMM) are excised as a propeptide. The segment at 150–170 (MGEEEDHDMMKRKSAYMRFGR) is disordered. Basic residues predominate over residues 159–170 (MKRKSAYMRFGR). F168 is modified (phenylalanine amide).

This sequence belongs to the FARP (FMRFamide related peptide) family. As to expression, each flp gene is expressed in a distinct set of neurons. Flp-6 is expressed in the ASE sensory neurons, AFD, ASG, PVT and I1 neurons.

It is found in the secreted. Functionally, FMRFamides and FMRFamide-like peptides are neuropeptides. KSAYMRF-amide has an excitatory effect on dissected pharyngeal myogenic muscle system. The chain is FMRFamide-like neuropeptides 6 from Caenorhabditis elegans.